We begin with the raw amino-acid sequence, 352 residues long: UDP-N-acetylglucosamine--N-acetylmuramyl-(pentapeptide) pyrophosphoryl-undecaprenol N-acetylglucosamine transferase 2 (352 aa).

Residues serine 11–glycine 13, arginine 164, serine 194, and glutamine 289 contribute to the UDP-N-acetyl-alpha-D-glucosamine site.

This sequence belongs to the glycosyltransferase 28 family. MurG subfamily.

The protein resides in the cell membrane. It carries out the reaction di-trans,octa-cis-undecaprenyl diphospho-N-acetyl-alpha-D-muramoyl-L-alanyl-D-glutamyl-meso-2,6-diaminopimeloyl-D-alanyl-D-alanine + UDP-N-acetyl-alpha-D-glucosamine = di-trans,octa-cis-undecaprenyl diphospho-[N-acetyl-alpha-D-glucosaminyl-(1-&gt;4)]-N-acetyl-alpha-D-muramoyl-L-alanyl-D-glutamyl-meso-2,6-diaminopimeloyl-D-alanyl-D-alanine + UDP + H(+). It functions in the pathway cell wall biogenesis; peptidoglycan biosynthesis. Functionally, cell wall formation. Catalyzes the transfer of a GlcNAc subunit on undecaprenyl-pyrophosphoryl-MurNAc-pentapeptide (lipid intermediate I) to form undecaprenyl-pyrophosphoryl-MurNAc-(pentapeptide)GlcNAc (lipid intermediate II). This is UDP-N-acetylglucosamine--N-acetylmuramyl-(pentapeptide) pyrophosphoryl-undecaprenol N-acetylglucosamine transferase 2 from Bacillus thuringiensis subsp. konkukian (strain 97-27).